A 218-amino-acid chain; its full sequence is Thiamine-phosphate synthase (218 aa).

4-amino-2-methyl-5-(diphosphooxymethyl)pyrimidine is bound by residues 43–47 and N75; that span reads QLRDK. Mg(2+)-binding residues include D76 and D95. 4-amino-2-methyl-5-(diphosphooxymethyl)pyrimidine is bound at residue S114. A 2-[(2R,5Z)-2-carboxy-4-methylthiazol-5(2H)-ylidene]ethyl phosphate-binding site is contributed by 141–143; the sequence is TPT. K144 serves as a coordination point for 4-amino-2-methyl-5-(diphosphooxymethyl)pyrimidine. G172 is a binding site for 2-[(2R,5Z)-2-carboxy-4-methylthiazol-5(2H)-ylidene]ethyl phosphate.

Belongs to the thiamine-phosphate synthase family. Mg(2+) is required as a cofactor.

It catalyses the reaction 2-[(2R,5Z)-2-carboxy-4-methylthiazol-5(2H)-ylidene]ethyl phosphate + 4-amino-2-methyl-5-(diphosphooxymethyl)pyrimidine + 2 H(+) = thiamine phosphate + CO2 + diphosphate. The enzyme catalyses 2-(2-carboxy-4-methylthiazol-5-yl)ethyl phosphate + 4-amino-2-methyl-5-(diphosphooxymethyl)pyrimidine + 2 H(+) = thiamine phosphate + CO2 + diphosphate. The catalysed reaction is 4-methyl-5-(2-phosphooxyethyl)-thiazole + 4-amino-2-methyl-5-(diphosphooxymethyl)pyrimidine + H(+) = thiamine phosphate + diphosphate. Its pathway is cofactor biosynthesis; thiamine diphosphate biosynthesis; thiamine phosphate from 4-amino-2-methyl-5-diphosphomethylpyrimidine and 4-methyl-5-(2-phosphoethyl)-thiazole: step 1/1. Functionally, condenses 4-methyl-5-(beta-hydroxyethyl)thiazole monophosphate (THZ-P) and 2-methyl-4-amino-5-hydroxymethyl pyrimidine pyrophosphate (HMP-PP) to form thiamine monophosphate (TMP). The protein is Thiamine-phosphate synthase of Thermobifida fusca (strain YX).